A 255-amino-acid chain; its full sequence is uncharacterized protein (255 aa).

The first 23 residues, 1–23 (MKRLNKLVLGISFLFLVISITAG), serve as a signal peptide directing secretion. The N-palmitoyl cysteine moiety is linked to residue cysteine 24. Cysteine 24 carries the S-diacylglycerol cysteine lipid modification.

It belongs to the staphylococcal tandem lipoprotein family.

The protein localises to the cell membrane. This is an uncharacterized protein from Staphylococcus aureus (strain N315).